We begin with the raw amino-acid sequence, 859 residues long: Protein argonaute-2 (859 aa).

A disordered region spans residues 1–27 (MYSGAGPALAPPAPPPPIQGYAFKPPP). A 3'-nitrotyrosine modification is found at Tyr-2. Over residues 9–27 (LAPPAPPPPIQGYAFKPPP) the composition is skewed to pro residues. The PAZ domain occupies 229 to 348 (PVIEFVCEVL…LPLEVCNIVA (120 aa)). Positions 311 to 316 (YFKDRH) are interaction with guide RNA. The residue at position 387 (Ser-387) is a Phosphoserine. Positions 517–818 (LVVVILPGKT…VAFRARYHLV (302 aa)) constitute a Piwi domain. The interval 524-566 (GKTPVYAEVKRVGDTVLGMATQCVQMKNVQRTTPQTLSNLCLK) is interaction with guide RNA. The interaction with GW182 family members stretch occupies residues 587-590 (FQQP). An a divalent metal cation-binding site is contributed by Asp-597. The segment at 650 to 660 (LIQFYKSTRFK) is interaction with GW182 family members. Asp-669 is an a divalent metal cation binding site. Pro-700 bears the 4-hydroxyproline mark. Interaction with guide RNA stretches follow at residues 709-710 (KR), 753-761 (HAGIQGTSR), and 790-812 (YVRCTRSVSIPAPAYYAHLVAFR). Position 807 (His-807) interacts with a divalent metal cation. 4 positions are modified to phosphoserine: Ser-824, Ser-828, Ser-831, and Ser-834.

Belongs to the argonaute family. Ago subfamily. Interacts with DICER1 through its Piwi domain and with TARBP2 during assembly of the RNA-induced silencing complex (RISC). Together, DICER1, AGO2 and TARBP2 constitute the trimeric RISC loading complex (RLC), or micro-RNA (miRNA) loading complex (miRLC). Within the RLC/miRLC, DICER1 and TARBP2 are required to process precursor miRNAs (pre-miRNAs) to mature miRNAs and then load them onto AGO2. AGO2 bound to the mature miRNA constitutes the minimal RISC and may subsequently dissociate from DICER1 and TARBP2. Note however that the term RISC has also been used to describe the trimeric RLC/miRLC. The formation of RISC complexes containing siRNAs rather than miRNAs appears to occur independently of DICER1. Interacts with AGO1. Also interacts with DDB1, DDX5, DDX6, DDX20, DHX30, DHX36, DDX47, DHX9, ELAVL, FXR1, GEMIN4, HNRNPF, IGF2BP1, ILF3, IMP8, MATR3, PABPC1, PRMT5, P4HA1, P4HB, RBM4, SART3, TNRC6A, TNRC6B, UPF1 and YBX1. Interacts with the P-body components DCP1A and XRN1. Associates with polysomes and messenger ribonucleoproteins (mNRPs). Interacts with RBM4; the interaction is modulated under stress-induced conditions, occurs under both cell proliferation and differentiation conditions and in an RNA- and phosphorylation-independent manner. Interacts with LIMD1, WTIP and AJUBA. Interacts with TRIM71; the interaction increases in presence of RNA. Interacts with APOBEC3G in an RNA-dependent manner. Interacts with APOBEC3A, APOBEC3C, APOBEC3F and APOBEC3H. Interacts with DICER1, TARBP2, EIF6, MOV10 and RPL7A (60S ribosome subunit); they form a large RNA-induced silencing complex (RISC). Interacts with FMR1. Interacts with ZFP36. Found in a complex, composed of AGO2, CHD7 and ARB2A. Interacts with RC3H1; the interaction is RNA independent. Interacts with SND1. Interacts with SYT11. Interacts with CLNK. Interacts with GARRE1. Interacts with GRB2; this interaction is important for the formation of a ternary complex containing GRB2, AGO2 and DICER1. As to quaternary structure, (Microbial infection) Interacts with Epstein-Barr virus (EBV) tegument protein BGLF2; this interaction participates in the regulation of cellular miRNA by the virus, leading to enhanced SUMOylation. In terms of assembly, (Microbial infection) Interacts with rotavirus A non-structural protein 5; this interaction probably plays a role in the sequestration of AGO2 in viral factories. (Microbial infection) Interacts with human herpesvirus 8 protein MTA/ORF57; this interaction inhibits P-body formation. Mg(2+) serves as cofactor. Requires Mn(2+) as cofactor. Post-translationally, hydroxylated. 4-hydroxylation appears to enhance protein stability but is not required for miRNA-binding or endonuclease activity. Ubiquitinated on surface-exposed lysines by a SCF-like E3 ubiquitin-protein ligase complex containing ZSWIM8 during target-directed microRNA degradation (TDMD), a process that mediates degradation of microRNAs (miRNAs). Ubiquitination by the SCF-like E3 ubiquitin-protein ligase complex containing ZSWIM8 leads to its subsequent degradation, thereby exposing miRNAs for degradation. ZSWIM8 recognizes and binds AGO2 when it is engaged with a TDMD target. In terms of processing, phosphorylated. A phosphorylation cycle of C-terminal serine cluster (Ser-824-Ser-834) regulates the release of target mRNAs. Target-binding leads to phosphorylation of these residues by CSNK1A1, which reduces the affinity of AGO2 for mRNA and enables target release. The ANKRD52-PPP6C phosphatase complex dephosphorylates the residues, which primes AGO2 for binding a new target. Post-translationally, phosphorylation at Ser-387 by AKT3; leads to up-regulate translational repression of microRNA target and down-regulate endonucleolytic cleavage.

It localises to the cytoplasm. It is found in the P-body. The protein resides in the nucleus. It catalyses the reaction Endonucleolytic cleavage to 5'-phosphomonoester.. Inhibited by EDTA. In terms of biological role, required for RNA-mediated gene silencing (RNAi) by the RNA-induced silencing complex (RISC). The 'minimal RISC' appears to include AGO2 bound to a short guide RNA such as a microRNA (miRNA) or short interfering RNA (siRNA). These guide RNAs direct RISC to complementary mRNAs that are targets for RISC-mediated gene silencing. The precise mechanism of gene silencing depends on the degree of complementarity between the miRNA or siRNA and its target. Binding of RISC to a perfectly complementary mRNA generally results in silencing due to endonucleolytic cleavage of the mRNA specifically by AGO2. Binding of RISC to a partially complementary mRNA results in silencing through inhibition of translation, and this is independent of endonuclease activity. May inhibit translation initiation by binding to the 7-methylguanosine cap, thereby preventing the recruitment of the translation initiation factor eIF4-E. May also inhibit translation initiation via interaction with EIF6, which itself binds to the 60S ribosomal subunit and prevents its association with the 40S ribosomal subunit. The inhibition of translational initiation leads to the accumulation of the affected mRNA in cytoplasmic processing bodies (P-bodies), where mRNA degradation may subsequently occur. In some cases RISC-mediated translational repression is also observed for miRNAs that perfectly match the 3' untranslated region (3'-UTR). Can also up-regulate the translation of specific mRNAs under certain growth conditions. Binds to the AU element of the 3'-UTR of the TNF (TNF-alpha) mRNA and up-regulates translation under conditions of serum starvation. Also required for transcriptional gene silencing (TGS), in which short RNAs known as antigene RNAs or agRNAs direct the transcriptional repression of complementary promoter regions. Its function is as follows. (Microbial infection) Upon Sars-CoV-2 infection, associates with viral miRNA-like small RNA, CoV2-miR-O7a, and may repress mRNAs, such as BATF2, to evade the IFN response. This Homo sapiens (Human) protein is Protein argonaute-2.